We begin with the raw amino-acid sequence, 75 residues long: Ferredoxin-thioredoxin reductase, variable chain (75 aa).

Residues 43–46 (QGRP) form an interaction with ferredoxin region.

It belongs to the ferredoxin thioredoxin reductase alpha subunit family. As to quaternary structure, heterodimer of subunit A (variable subunit) and subunit B (catalytic subunit). Heterodimeric FTR forms a complex with ferredoxin and thioredoxin.

In terms of biological role, variable subunit of the ferredoxin-thioredoxin reductase (FTR), which catalyzes the two-electron reduction of thioredoxins by the electrons provided by reduced ferredoxin. This Synechocystis sp. (strain ATCC 27184 / PCC 6803 / Kazusa) protein is Ferredoxin-thioredoxin reductase, variable chain (ftrV).